Here is a 135-residue protein sequence, read N- to C-terminus: MNFLILFCVVASASVVYSSISDQCLRCICEVESGCRAIGCHWDVYSNSCGYFQIKQGYWTDCGSPGHSMESCADNYNCASGCVRSYMDHYIKYNGCADTCESYARMHNGGPNGCKSSHHHATDNYWRLVQAKGCS.

A signal peptide spans 1 to 18 (MNFLILFCVVASASVVYS). Positions 19-135 (SISDQCLRCI…WRLVQAKGCS (117 aa)) constitute an I-type lysozyme domain. 6 disulfides stabilise this stretch: cysteine 24–cysteine 100, cysteine 29–cysteine 35, cysteine 40–cysteine 49, cysteine 62–cysteine 82, cysteine 72–cysteine 78, and cysteine 96–cysteine 114. The Proton donor role is filled by glutamate 32. Residue aspartate 43 is the Nucleophile of the active site. Residue 55–61 (KQGYWTD) coordinates substrate. Residues tyrosine 86 and 107-109 (HNG) contribute to the substrate site.

As to expression, expressed in the epithelia of the basophil cells in the digestive tubules, but not in the epithelial cells lining the digestive ducts and stomach. Expressed at a much lower level in the style sac-midgut tissues. No expression detected in mantle, gills, labial palps or hemocytes.

It is found in the secreted. It carries out the reaction Hydrolysis of (1-&gt;4)-beta-linkages between N-acetylmuramic acid and N-acetyl-D-glucosamine residues in a peptidoglycan and between N-acetyl-D-glucosamine residues in chitodextrins.. Its activity is regulated as follows. Activity decreased by 80% by addition of 0.01 M calcium, zinc or magnesium. Activity only decreased by 17% by addition of ammonium, and by 2% by addition of sodium. Functionally, the main role of this lysozyme is in digestion. Has antibacterial activity against the Gram-positive bacterium P.cerevisiae and the Gram-negative bacteria E.coli and V.vulnificus. Shows some chitinase activity but no isopeptidase activity. In Crassostrea virginica (Eastern oyster), this protein is Lysozyme 2.